A 294-amino-acid chain; its full sequence is Melanocortin receptor 5 (294 aa).

Topologically, residues Phe1–Gly29 are extracellular. N-linked (GlcNAc...) asparagine glycans are attached at residues Asn7, Asn12, and Asn20. Residues Ile30–Ile53 traverse the membrane as a helical segment. Over Ala54–Phe65 the chain is Cytoplasmic. A helical membrane pass occupies residues Phe66–Tyr89. At Leu90–Leu106 the chain is on the extracellular side. The helical transmembrane segment at Asp107–Val130 threads the bilayer. The Cytoplasmic portion of the chain corresponds to Asp131–Thr147. Residues Gly148–Val171 form a helical membrane-spanning segment. Residues Tyr172–Val178 lie on the Extracellular side of the membrane. A helical membrane pass occupies residues Val179–Gln203. The Cytoplasmic portion of the chain corresponds to Ala204–Thr231. The helical transmembrane segment at Leu232–Pro257 threads the bilayer. Residues Gln258 to Phe265 lie on the Extracellular side of the membrane. The chain crosses the membrane as a helical span at residues Met266 to Phe289. The Cytoplasmic portion of the chain corresponds to Arg290–Lys294.

Belongs to the G-protein coupled receptor 1 family.

The protein resides in the cell membrane. In terms of biological role, receptor for MSH (alpha, beta and gamma) and ACTH. The activity of this receptor is mediated by G proteins which activate adenylate cyclase. This receptor is a possible mediator of the immunomodulation properties of melanocortins. This chain is Melanocortin receptor 5 (MC5R), found in Sus scrofa (Pig).